A 396-amino-acid polypeptide reads, in one-letter code: Pyridinium-3,5-bisthiocarboxylic acid mononucleotide nickel insertion protein (396 aa).

This sequence belongs to the LarC family.

The enzyme catalyses Ni(II)-pyridinium-3,5-bisthiocarboxylate mononucleotide = pyridinium-3,5-bisthiocarboxylate mononucleotide + Ni(2+). Functionally, involved in the biosynthesis of a nickel-pincer cofactor ((SCS)Ni(II) pincer complex). Binds Ni(2+), and functions in nickel delivery to pyridinium-3,5-bisthiocarboxylic acid mononucleotide (P2TMN), to form the mature cofactor. Is thus probably required for the activation of nickel-pincer cofactor-dependent enzymes. The chain is Pyridinium-3,5-bisthiocarboxylic acid mononucleotide nickel insertion protein from Moorella thermoacetica (strain ATCC 39073 / JCM 9320).